A 57-amino-acid chain; its full sequence is UPF0434 protein Shal_2504 (57 aa).

The protein belongs to the UPF0434 family.

The chain is UPF0434 protein Shal_2504 from Shewanella halifaxensis (strain HAW-EB4).